Consider the following 127-residue polypeptide: Ribonuclease P protein component (127 aa).

The protein belongs to the RnpA family. In terms of assembly, consists of a catalytic RNA component (M1 or rnpB) and a protein subunit.

The catalysed reaction is Endonucleolytic cleavage of RNA, removing 5'-extranucleotides from tRNA precursor.. Its function is as follows. RNaseP catalyzes the removal of the 5'-leader sequence from pre-tRNA to produce the mature 5'-terminus. It can also cleave other RNA substrates such as 4.5S RNA. The protein component plays an auxiliary but essential role in vivo by binding to the 5'-leader sequence and broadening the substrate specificity of the ribozyme. The polypeptide is Ribonuclease P protein component (Agrobacterium fabrum (strain C58 / ATCC 33970) (Agrobacterium tumefaciens (strain C58))).